Reading from the N-terminus, the 446-residue chain is RUN domain-containing protein 3A (446 aa).

An interaction with RAP2A region spans residues 1 to 298 (METSFVQTTM…LQLQLEEAAA (298 aa)). In terms of domain architecture, RUN spans 52–189 (DDSSEEFVNF…IDFSFCLKGE (138 aa)). Thr215 is modified (phosphothreonine). The disordered stretch occupies residues 216-239 (DEEERHSAESSTSEDNSPEHPYLP). At Ser232 the chain carries Phosphoserine. A coiled-coil region spans residues 267–322 (YLEELVRLRESQLKDLEAENRRLQLQLEEAAAQNQREKRELEGVILELQEQLTGLI). The segment covering 372–384 (PLSAEASLSSDSQ) has biased composition (polar residues). A disordered region spans residues 372–404 (PLSAEASLSSDSQRLGEGTRDEEPWGPIGKDPT). A phosphoserine mark is found at Ser416 and Ser419.

Belongs to the RUNDC3 family. Interacts with the GTP-bound form of RAP2A.

In terms of biological role, may act as an effector of RAP2A in neuronal cells. The protein is RUN domain-containing protein 3A (RUNDC3A) of Pongo abelii (Sumatran orangutan).